A 147-amino-acid chain; its full sequence is Hemoglobin anodic subunit beta (147 aa).

Residues 2–147 enclose the Globin domain; the sequence is EWTDGERTAI…VTSALARQYH (146 aa). 2 residues coordinate heme b: His-63 and His-92.

The protein belongs to the globin family. Heterotetramer of two alpha chains and two beta chains. As to expression, red blood cells.

Involved in oxygen transport from gills to the various peripheral tissues. The protein is Hemoglobin anodic subunit beta of Gymnothorax unicolor (Brown moray).